The primary structure comprises 193 residues: Peptidyl-tRNA hydrolase (193 aa).

Tyrosine 15 provides a ligand contact to tRNA. The Proton acceptor role is filled by histidine 20. Phenylalanine 65, asparagine 67, and asparagine 113 together coordinate tRNA.

This sequence belongs to the PTH family. As to quaternary structure, monomer.

It is found in the cytoplasm. The catalysed reaction is an N-acyl-L-alpha-aminoacyl-tRNA + H2O = an N-acyl-L-amino acid + a tRNA + H(+). In terms of biological role, hydrolyzes ribosome-free peptidyl-tRNAs (with 1 or more amino acids incorporated), which drop off the ribosome during protein synthesis, or as a result of ribosome stalling. Its function is as follows. Catalyzes the release of premature peptidyl moieties from peptidyl-tRNA molecules trapped in stalled 50S ribosomal subunits, and thus maintains levels of free tRNAs and 50S ribosomes. The protein is Peptidyl-tRNA hydrolase of Ehrlichia ruminantium (strain Gardel).